We begin with the raw amino-acid sequence, 161 residues long: Ubiquitin D (161 aa).

Ubiquitin-like domains are found at residues Ser-3–Val-77 and Leu-86–Ile-159.

The protein belongs to the ubiquitin D family. Interacts directly with the 26S proteasome. Interacts with NUB1; this interaction facilitates the linking of UBD-conjugated target protein to the proteasome complex and accelerates its own degradation and that of its conjugates. Interacts (via ubiquitin-like 1 domain) with the spindle checkpoint protein MAD2L1 during mitosis. Present in aggresomes of proteasome inhibited cells. Interacts with HDAC6 under proteasome impairment conditions. Forms a thioester with UBA6 in cells stimulated with tumor necrosis factor-alpha (TNFa) and interferon-gamma (IFNg). Interacts with SQSTM1 and TP53/p53. Post-translationally, can be acetylated.

The protein resides in the nucleus. It localises to the cytoplasm. Ubiquitin-like protein modifier which can be covalently attached to target proteins and subsequently leads to their degradation by the 26S proteasome, in a NUB1-dependent manner. Conjugation to the target protein is activated by UBA6 via adenylation of its C-terminal glycine. Probably functions as a survival factor. Promotes the expression of the proteasome subunit beta type-9 (PSMB9/LMP2). Regulates TNF-alpha-induced and LPS-mediated activation of the central mediator of innate immunity NF-kappa-B by promoting TNF-alpha-mediated proteasomal degradation of ubiquitinated-I-kappa-B-alpha. Required for TNF-alpha-induced p65 nuclear translocation in renal tubular epithelial cells (RTECs). May be involved in dendritic cell (DC) maturation, the process by which immature dendritic cells differentiate into fully competent antigen-presenting cells that initiate T-cell responses. Mediates mitotic non-disjunction and chromosome instability, in long-term in vitro culture and cancers, by abbreviating mitotic phase and impairing the kinetochore localization of MAD2L1 during the prometaphase stage of the cell cycle. May be involved in the formation of aggresomes when proteasome is saturated or impaired. Mediates apoptosis in a caspase-dependent manner, especially in renal epithelium and tubular cells during renal diseases. This Rattus norvegicus (Rat) protein is Ubiquitin D (Ubd).